A 293-amino-acid chain; its full sequence is Protease HtpX (293 aa).

2 consecutive transmembrane segments (helical) span residues 4–24 (IALFLLTNLAVMVVFGLVLSL) and 34–54 (GLLIMALLFGFGGSFISLLMS). Histidine 139 is a binding site for Zn(2+). Glutamate 140 is a catalytic residue. Histidine 143 is a Zn(2+) binding site. Helical transmembrane passes span 158-178 (VVNTFVIFISRIIAQIAAGFL) and 193-213 (LIYFAVATVLELVFGILASII). Glutamate 222 contacts Zn(2+).

The protein belongs to the peptidase M48B family. It depends on Zn(2+) as a cofactor.

The protein resides in the cell inner membrane. The chain is Protease HtpX from Salmonella agona (strain SL483).